Here is a 650-residue protein sequence, read N- to C-terminus: Phosphatidylinositol 4-kinase gamma 7 (650 aa).

The Ubiquitin-like; degenerate domain occupies 46 to 103 (RRVFVQTETGCVLGMELDRSDNVHTVKRRLQIALNFPTEESSLTYGDMVLTNDLSAVR). The region spanning 166–463 (GVEPLPVHSG…SVTERDVFSP (298 aa)) is the PI3K/PI4K catalytic domain. Residues 172-178 (VHSGLGG) are G-loop. Residues 173-179 (HSGLGGA), lysine 194, and 283-286 (QKFV) contribute to the ATP site. The catalytic loop stretch occupies residues 316–324 (FNTDRHGGN). Residues 343–369 (PIDHGLCLPETLEDPYFEWIHWPQASL) form an activation loop region. Residue aspartate 345 participates in ATP binding. Disordered stretches follow at residues 508-534 (SLGK…ENTV) and 560-595 (STSM…KSAN). Residues 516–529 (IKEEEEDEEEEEDK) show a composition bias toward acidic residues. Composition is skewed to polar residues over residues 560 to 569 (STSMKNTHLS) and 585 to 595 (ENTSSGHKSAN). The residue at position 593 (serine 593) is a Phosphoserine.

The protein belongs to the PI3/PI4-kinase family. Type II PI4K subfamily.

The catalysed reaction is a 1,2-diacyl-sn-glycero-3-phospho-(1D-myo-inositol) + ATP = a 1,2-diacyl-sn-glycero-3-phospho-(1D-myo-inositol 4-phosphate) + ADP + H(+). The phosphorylation of phosphatidylinositol (PI) to PI4P is the first committed step in the generation of phosphatidylinositol 4,5-bisphosphate (PIP2), a precursor of the second messenger inositol 1,4,5-trisphosphate (InsP3). Undergoes autophosphorylation and phosphorylates serine/threonine residues of protein substrates. This Arabidopsis thaliana (Mouse-ear cress) protein is Phosphatidylinositol 4-kinase gamma 7.